The sequence spans 266 residues: MRVEIIFLGCGGGRWATITQKKATGGFRIHTNELRMHVDPGPGAIVRLNELKISPWRTNALFISHCHPDHYTDGEIIVEAITQGMTKKRGVFLGSLSVVEGFGEYEYVVSKYHQSKLEEVRVLYPGDSAELYDTTIKATHTKHGDPFGIGFRLSTIYGDIGYTSDTEFIPQLIEDFDGVRILIANIVRKKNERIKGHLCSNDAIDLINSMNKKPELLIMNHMGVKMTNPQIEAEYISQNTGIEVIPARLGLKVELLNGKYKYQLIK.

This is an uncharacterized protein from Methanocaldococcus jannaschii (strain ATCC 43067 / DSM 2661 / JAL-1 / JCM 10045 / NBRC 100440) (Methanococcus jannaschii).